The sequence spans 160 residues: UPF0225 protein PputW619_1140 (160 aa).

This sequence belongs to the UPF0225 family.

This Pseudomonas putida (strain W619) protein is UPF0225 protein PputW619_1140.